The following is a 602-amino-acid chain: Aspartate--tRNA(Asp/Asn) ligase (602 aa).

Glu-170 is an L-aspartate binding site. The interval 194–197 (QLFK) is aspartate. Arg-216 provides a ligand contact to L-aspartate. ATP-binding positions include 216-218 (RDE) and Gln-225. Residue His-448 participates in L-aspartate binding. ATP is bound at residue Glu-482. Position 489 (Arg-489) interacts with L-aspartate. 534–537 (GWDR) lines the ATP pocket. Residues 559–602 (GGVDPLTDAPAPISAQQRKESGIDAKPEKKSEDKKSEGDTAEAK) are disordered. Basic and acidic residues predominate over residues 575–602 (QRKESGIDAKPEKKSEDKKSEGDTAEAK).

The protein belongs to the class-II aminoacyl-tRNA synthetase family. Type 1 subfamily. As to quaternary structure, homodimer.

It is found in the cytoplasm. It catalyses the reaction tRNA(Asx) + L-aspartate + ATP = L-aspartyl-tRNA(Asx) + AMP + diphosphate. Its function is as follows. Aspartyl-tRNA synthetase with relaxed tRNA specificity since it is able to aspartylate not only its cognate tRNA(Asp) but also tRNA(Asn). Reaction proceeds in two steps: L-aspartate is first activated by ATP to form Asp-AMP and then transferred to the acceptor end of tRNA(Asp/Asn). The protein is Aspartate--tRNA(Asp/Asn) ligase of Rhodococcus erythropolis (strain PR4 / NBRC 100887).